A 122-amino-acid chain; its full sequence is Large ribosomal subunit protein uL14 (122 aa).

The protein belongs to the universal ribosomal protein uL14 family. In terms of assembly, part of the 50S ribosomal subunit. Forms a cluster with proteins L3 and L19. In the 70S ribosome, L14 and L19 interact and together make contacts with the 16S rRNA in bridges B5 and B8.

Binds to 23S rRNA. Forms part of two intersubunit bridges in the 70S ribosome. The polypeptide is Large ribosomal subunit protein uL14 (Gemmatimonas aurantiaca (strain DSM 14586 / JCM 11422 / NBRC 100505 / T-27)).